A 209-amino-acid polypeptide reads, in one-letter code: Outer-membrane lipoprotein carrier protein (209 aa).

Positions 1–21 are cleaved as a signal peptide; the sequence is MHRQLRYAVLATALFASTAFA.

It belongs to the LolA family. In terms of assembly, monomer.

It localises to the periplasm. Its function is as follows. Participates in the translocation of lipoproteins from the inner membrane to the outer membrane. Only forms a complex with a lipoprotein if the residue after the N-terminal Cys is not an aspartate (The Asp acts as a targeting signal to indicate that the lipoprotein should stay in the inner membrane). The protein is Outer-membrane lipoprotein carrier protein of Xanthomonas campestris pv. campestris (strain 8004).